Reading from the N-terminus, the 234-residue chain is Riboflavin kinase (234 aa).

An H-T-H motif-like region spans residues 1-98; sequence MAESTTAVGH…QEIFGDNSSV (98 aa). The riboflavin kinase stretch occupies residues 99–234; it reads VELTGTVTSG…RITVQLKPKE (136 aa). A CDP-binding site is contributed by 108–113; the sequence is GMGEGR. T137 and N139 together coordinate Mg(2+). Residues T199 and E207 each contribute to the FMN site. A CDP-binding site is contributed by 212–215; it reads ERLR.

This sequence belongs to the archaeal riboflavin kinase family. It depends on Mg(2+) as a cofactor.

The catalysed reaction is riboflavin + CTP = CDP + FMN + H(+). The protein operates within cofactor biosynthesis; FMN biosynthesis; FMN from riboflavin (CTP route): step 1/1. Catalyzes the CTP-dependent phosphorylation of riboflavin (vitamin B2) to form flavin mononucleotide (FMN). The chain is Riboflavin kinase (ribK) from Haloquadratum walsbyi (strain DSM 16790 / HBSQ001).